Reading from the N-terminus, the 185-residue chain is MKNLNQVVDALKQGNVIAYPTEGVFGVGCDPDNEQALLNLLDVKKRPKEKGLILIAASIEQLLPYIDLEQLTEEQVNTIKASWPGPVTWIVPVKTSTLPLVTGQFDSIAVRVTAHPQVKAICNAFGKPITSTSANLSGLEPCRSVTEVEAQLGDTGVVIFQGEVGNRTQPTEIRDAKTGNTLRQG.

The region spanning 1-185 (MKNLNQVVDA…AKTGNTLRQG (185 aa)) is the YrdC-like domain.

It belongs to the SUA5 family. TsaC subfamily.

The protein localises to the cytoplasm. It carries out the reaction L-threonine + hydrogencarbonate + ATP = L-threonylcarbamoyladenylate + diphosphate + H2O. In terms of biological role, required for the formation of a threonylcarbamoyl group on adenosine at position 37 (t(6)A37) in tRNAs that read codons beginning with adenine. Catalyzes the conversion of L-threonine, HCO(3)(-)/CO(2) and ATP to give threonylcarbamoyl-AMP (TC-AMP) as the acyladenylate intermediate, with the release of diphosphate. This is Threonylcarbamoyl-AMP synthase from Aliivibrio fischeri (strain ATCC 700601 / ES114) (Vibrio fischeri).